Here is a 516-residue protein sequence, read N- to C-terminus: Probable rhamnogalacturonase B (516 aa).

The first 21 residues, 1–21 (MRLHAFTLLSLLGLVPSFAAA), serve as a signal peptide directing secretion. Cys42 and Cys68 are oxidised to a cystine. A glycan (N-linked (GlcNAc...) asparagine) is linked at Asn145. Asp219 acts as the Proton donor in catalysis. A disulfide bond links Cys221 and Cys238. N-linked (GlcNAc...) asparagine glycosylation is present at Asn239. Residue His294 is part of the active site. A glycan (N-linked (GlcNAc...) asparagine) is linked at Asn321. 2 disulfide bridges follow: Cys344-Cys350 and Cys372-Cys381. Residues 462-516 (ETPAAASRSEQVVQGASQETSQPAPESAGPVRSVPTGGNRPSRHRHGHHHFWIAA) form a disordered region. Positions 469 to 485 (RSEQVVQGASQETSQPA) are enriched in polar residues. A compositionally biased stretch (basic residues) spans 502–516 (PSRHRHGHHHFWIAA).

The protein belongs to the glycosyl hydrolase 28 family.

It localises to the secreted. It carries out the reaction Endohydrolysis of alpha-D-GalA-(1-&gt;2)-alpha-L-Rha glycosidic bond in the rhamnogalacturonan I backbone with initial inversion of anomeric configuration releasing oligosaccharides with beta-D-GalA at the reducing end.. Functionally, pectinolytic enzymes consist of four classes of enzymes: pectine lyase, polygalacturonase, pectin methylesterase and rhamnogalacturonase. Hydrolyzes alpha-D-galacturonopyranosyl-(1,2)-alpha-L-rhamnopyranosyl linkages in the backbone of the hairy regions of pectins. The polypeptide is Probable rhamnogalacturonase B (rhgB) (Neosartorya fischeri (strain ATCC 1020 / DSM 3700 / CBS 544.65 / FGSC A1164 / JCM 1740 / NRRL 181 / WB 181) (Aspergillus fischerianus)).